The primary structure comprises 225 residues: Phosphatidylserine decarboxylase proenzyme (225 aa).

S189 acts as the Schiff-base intermediate with substrate; via pyruvic acid in catalysis. S189 is modified (pyruvic acid (Ser); by autocatalysis).

The protein belongs to the phosphatidylserine decarboxylase family. PSD-A subfamily. As to quaternary structure, heterodimer of a large membrane-associated beta subunit and a small pyruvoyl-containing alpha subunit. Requires pyruvate as cofactor. Post-translationally, is synthesized initially as an inactive proenzyme. Formation of the active enzyme involves a self-maturation process in which the active site pyruvoyl group is generated from an internal serine residue via an autocatalytic post-translational modification. Two non-identical subunits are generated from the proenzyme in this reaction, and the pyruvate is formed at the N-terminus of the alpha chain, which is derived from the carboxyl end of the proenzyme. The post-translation cleavage follows an unusual pathway, termed non-hydrolytic serinolysis, in which the side chain hydroxyl group of the serine supplies its oxygen atom to form the C-terminus of the beta chain, while the remainder of the serine residue undergoes an oxidative deamination to produce ammonia and the pyruvoyl prosthetic group on the alpha chain.

It localises to the cell membrane. The enzyme catalyses a 1,2-diacyl-sn-glycero-3-phospho-L-serine + H(+) = a 1,2-diacyl-sn-glycero-3-phosphoethanolamine + CO2. The protein operates within phospholipid metabolism; phosphatidylethanolamine biosynthesis; phosphatidylethanolamine from CDP-diacylglycerol: step 2/2. Its function is as follows. Catalyzes the formation of phosphatidylethanolamine (PtdEtn) from phosphatidylserine (PtdSer). The polypeptide is Phosphatidylserine decarboxylase proenzyme (Amoebophilus asiaticus (strain 5a2)).